A 204-amino-acid polypeptide reads, in one-letter code: Probable 5-formyltetrahydrofolate cyclo-ligase (204 aa).

5–9 (KNQLR) serves as a coordination point for ATP. Substrate contacts are provided by residues Glu-57, Trp-102, and 140–144 (HGKGY). ATP contacts are provided by residues 139-146 (GHGKGYYD) and Asp-188.

This sequence belongs to the 5-formyltetrahydrofolate cyclo-ligase family.

The catalysed reaction is (6S)-5-formyl-5,6,7,8-tetrahydrofolate + ATP = (6R)-5,10-methenyltetrahydrofolate + ADP + phosphate. The polypeptide is Probable 5-formyltetrahydrofolate cyclo-ligase (Schizosaccharomyces pombe (strain 972 / ATCC 24843) (Fission yeast)).